Here is a 393-residue protein sequence, read N- to C-terminus: Protein FAM53C (393 aa).

Position 1 is an N-acetylmethionine (Met1). The interval 77–120 is disordered; it reads HLRPPSRGNSPKEPPLSQVLSPEPPDPEKLPVPPAPPSKRHCRS. A phosphoserine mark is found at Ser122 and Ser162. Disordered stretches follow at residues 141–167 and 204–283; these read LWTPIKHRGNAGGGGPQVPQQSPPKRV and QPCA…ARKT. A compositionally biased stretch (polar residues) spans 204–215; it reads QPCATSPQSGSW. Ser232, Ser234, Ser255, Ser273, and Ser299 each carry phosphoserine. Residues 241-256 show a composition bias toward low complexity; the sequence is ASRFLPSARSSPASSP. Over residues 343 to 355 the composition is skewed to low complexity; that stretch reads SCSPVEGSSQVLS. The tract at residues 343-365 is disordered; it reads SCSPVEGSSQVLSESEEEEEGSV.

It belongs to the FAM53 family.

In Mus musculus (Mouse), this protein is Protein FAM53C.